The chain runs to 144 residues: Putative pre-16S rRNA nuclease (144 aa).

This sequence belongs to the YqgF nuclease family.

It is found in the cytoplasm. Functionally, could be a nuclease involved in processing of the 5'-end of pre-16S rRNA. This is Putative pre-16S rRNA nuclease from Blochmanniella pennsylvanica (strain BPEN).